Consider the following 366-residue polypeptide: Leucine dehydrogenase (366 aa).

Lys82 is an active-site residue. 182-188 provides a ligand contact to NAD(+); that stretch reads GVGNVAY.

It belongs to the Glu/Leu/Phe/Val dehydrogenases family.

The catalysed reaction is L-leucine + NAD(+) + H2O = 4-methyl-2-oxopentanoate + NH4(+) + NADH + H(+). It functions in the pathway amino-acid degradation; L-leucine degradation; 4-methyl-2-oxopentanoate from L-leucine (dehydrogenase route): step 1/1. Catalyzes the reversible deamination of L-leucine to 4-methyl-2-oxopentanoate. The polypeptide is Leucine dehydrogenase (ldh) (Bacillus cereus).